A 191-amino-acid polypeptide reads, in one-letter code: PBAN-type neuropeptides (191 aa).

A signal peptide spans 1-17 (MFSPLLFFAVSISCVLA). The residue at position 44 (L44) is a Leucine amide. Residues 48–91 (SLRISTEDNRQAFFKLLEAADALKYYYDRLPYEMQADEPETRVT) constitute a propeptide that is removed on maturation. 4 positions are modified to leucine amide: L100, L120, L156, and L166. Positions 169–191 (ELSYDMLPSKLRLVRSTNRTQST) are excised as a propeptide.

The protein belongs to the pyrokinin family. In terms of tissue distribution, expressed in the subesophageal ganglion.

The protein localises to the secreted. A hormone that controls sex pheromone production in females and pheromone responsiveness in male. The sequence is that of PBAN-type neuropeptides from Spodoptera littoralis (Egyptian cotton leafworm).